Consider the following 422-residue polypeptide: F-box protein At3g12350 (422 aa).

In terms of domain architecture, F-box spans 5–52; sequence ALPFCEIPEDLQLRILSLLTPAEISSFACTSKRFASLCQEDGKIWHVM. Composition is skewed to basic and acidic residues over residues 197–207 and 242–252; these read NNRREDQRSSG and KEKERQASRTK. Disordered regions lie at residues 197 to 216 and 226 to 252; these read NNRREDQRSSGDESDDLISS and LANKTSPGGDRRRQKRKEKERQASRTK.

In Arabidopsis thaliana (Mouse-ear cress), this protein is F-box protein At3g12350.